The sequence spans 285 residues: Hydrolase in pqqF 5'region (285 aa).

The region spanning 22-258 is the CN hydrolase domain; it reads MRVALYQCPP…EALIIGTLDR (237 aa). Residue glutamate 60 is the Proton acceptor of the active site. Residue lysine 131 is the Proton donor of the active site. Cysteine 165 serves as the catalytic Nucleophile.

Belongs to the carbon-nitrogen hydrolase superfamily. NIT1/NIT2 family.

This Pseudomonas protegens (strain DSM 19095 / LMG 27888 / CFBP 6595 / CHA0) protein is Hydrolase in pqqF 5'region.